The sequence spans 949 residues: ATPase 1, plasma membrane-type (949 aa).

S2 is modified (N-acetylserine). Topologically, residues 2–61 are cytoplasmic; it reads SGLEDIKNETVDLEKIPIEEVFQQLKCTREGLTTQEGEDRIVIFGPNKLEEKKESKILKF. The helical transmembrane segment at 62 to 81 threads the bilayer; that stretch reads LGFMWNPLSWVMEAAALMAI. The Extracellular portion of the chain corresponds to 82–93; the sequence is ALANGDNRPPDW. A helical transmembrane segment spans residues 94 to 114; the sequence is QDFVGIICLLVINSTISFIEE. At 115–243 the chain is on the cytoplasmic side; it reads NNAGNAAAAL…GHFQKVLTSI (129 aa). Residues 244–264 traverse the membrane as a helical segment; sequence GNFCICSIAIGIAIEIVVMYP. At 265-273 the chain is on the extracellular side; it reads IQHRKYRDG. A helical membrane pass occupies residues 274-291; that stretch reads IDNLLVLLIGGIPIAMPT. Over 292–643 the chain is Cytoplasmic; it reads VLSVTMAIGS…TSRAIFQRMK (352 aa). Catalysis depends on D329, which acts as the 4-aspartylphosphate intermediate. 2 residues coordinate Mg(2+): D588 and D592. A helical membrane pass occupies residues 644-665; that stretch reads NYTIYAVSITIRIVFGFMLIAL. Residues 666 to 670 are Extracellular-facing; the sequence is IWEFD. The helical transmembrane segment at 671–693 threads the bilayer; that stretch reads FSAFMVLIIAILNDGTIMTISKD. The Cytoplasmic segment spans residues 694–709; it reads RVKPSPTPDSWKLKEI. The helical transmembrane segment at 710 to 730 threads the bilayer; the sequence is FATGIVLGGYQAIMSVIFFWA. The Extracellular portion of the chain corresponds to 731-751; sequence AHKTDFFSDKFGVRSIRDNND. The chain crosses the membrane as a helical span at residues 752 to 772; it reads ELMGAVYLQVSIISQALIFVT. The Cytoplasmic portion of the chain corresponds to 773–784; the sequence is RSRSWSFVERPG. Residues 785–805 traverse the membrane as a helical segment; it reads ALLMIAFVIAQLVATLIAVYA. The Extracellular segment spans residues 806-813; sequence DWTFAKVK. A helical membrane pass occupies residues 814 to 834; that stretch reads GIGWGWAGVIWIYSIVTYFPQ. Over 835-949 the chain is Cytoplasmic; that stretch reads DILKFAIRYI…IDTAGHHYTV (115 aa). A Phosphothreonine modification is found at T881. 2 positions are modified to phosphoserine: S899 and S931. Residues 947–949 are interaction with 14-3-3 proteins; the sequence is YTV. T948 bears the Phosphothreonine mark.

This sequence belongs to the cation transport ATPase (P-type) (TC 3.A.3) family. Type IIIA subfamily. Binds to 14-3-3 proteins. The binding is induced by phosphorylation of Thr-948. Binding to 14-3-3 proteins activates the H(+)-ATPase. Interacts with PPI1; this interaction promotes ATPase activity. Interacts with PSY1R. Part of a functional complex containing PSKR1, BAK1, CNGC17, and AHA. Interacts with CNGC17 and PSKR1. Triggered by SAUR9 via the phosphorylation of the C-terminal autoinhibitory domain. Interacts with AHA2. Binds to CBC1 and CBC2. Phosphorylated, probably by PHOT1 and PHOT2, at C-terminal Thr-948 in guard cells in response to blue light to induce stomatal opening. Expressed in guard cells, mesophyll cells, leaves and roots.

Its subcellular location is the cell membrane. The catalysed reaction is ATP + H2O + H(+)(in) = ADP + phosphate + 2 H(+)(out). With respect to regulation, phosphorylation on Thr residues is repressed by tyrphostin 9, sphingosine, GW5074 and BML-265. By contrast, the fungal phytotoxin fusicoccin (FC) promotes phosphorylation of Thr-948 independently to BHP, thus leading to large stomatal opening. Its function is as follows. The plasma membrane H(+) ATPase of plants and fungi generates a proton gradient that drives the active transport of nutrients by H(+)-symport. The resulting external acidification and/or internal alkinization may mediate growth responses. Forms a functional cation-translocating unit with CNGC17 that is activated by PSKR1/BAK1 and possibly other BAK1/RLK complexes. Promotes stomatal opening in response to blue light. The protein is ATPase 1, plasma membrane-type of Arabidopsis thaliana (Mouse-ear cress).